We begin with the raw amino-acid sequence, 468 residues long: Protein ABHD15 (468 aa).

Positions 1–23 (MPPWGAALALILAVLALLGLLGP) are cleaved as a signal peptide. Positions 33 to 61 (VGERTLPGAQDRDDGEEADGGGPADQFSD) are disordered. Residues D360 and H391 each act as charge relay system in the active site. Residue S434 is modified to Phosphoserine.

The protein belongs to the AB hydrolase superfamily. AB hydrolase 4 family. As to quaternary structure, interacts with PDE3B; this interaction regulates PDE3B's stability and expression and, thereby, impacts the antilipolytic action of insulin.

It localises to the secreted. Functionally, may regulate adipocyte lipolysis and liver lipid accumulation. This Homo sapiens (Human) protein is Protein ABHD15.